The primary structure comprises 252 residues: MLSIDLNCDCGESYGAFQIGDDEGILPFVSSANIACGGHAGDPIVMRHTVRRCRELGVAVGAHPSYPDLHGFGRRVLPMSPAEIEAWVLAQIGALAAIARAEGVELRHVKPHGALYNVAARDHVVATAVARAVAAFSHELALVGLADSALIDAGREMGLPVLAEAFADRAYEADGRLRDRRYPDALIIDPTACLKQTLSIVRDGVVIAIDGTPVPLQADTICVHGDTPGAAARAAALRHGLEAAGITVRTPR.

Belongs to the LamB/PxpA family. In terms of assembly, forms a complex composed of PxpA, PxpB and PxpC.

It carries out the reaction 5-oxo-L-proline + ATP + 2 H2O = L-glutamate + ADP + phosphate + H(+). Functionally, catalyzes the cleavage of 5-oxoproline to form L-glutamate coupled to the hydrolysis of ATP to ADP and inorganic phosphate. The chain is 5-oxoprolinase subunit A from Chloroflexus aggregans (strain MD-66 / DSM 9485).